We begin with the raw amino-acid sequence, 336 residues long: Nucleoid-associated protein Spro_3255 (336 aa).

It belongs to the YejK family.

The protein localises to the cytoplasm. The protein resides in the nucleoid. This is Nucleoid-associated protein Spro_3255 from Serratia proteamaculans (strain 568).